Here is a 266-residue protein sequence, read N- to C-terminus: Undecaprenyl-diphosphatase (266 aa).

8 helical membrane passes run 1–21 (METF…FLPI), 39–59 (QGLS…VIYF), 87–107 (WWII…KDFI), 111–131 (FRNT…LWAA), 144–164 (MGWK…IPGT), 183–203 (AAAR…ALLV), 218–238 (ALGL…HFFL), and 244–264 (IGMT…LGLL).

Belongs to the UppP family.

The protein resides in the cell inner membrane. The catalysed reaction is di-trans,octa-cis-undecaprenyl diphosphate + H2O = di-trans,octa-cis-undecaprenyl phosphate + phosphate + H(+). Catalyzes the dephosphorylation of undecaprenyl diphosphate (UPP). Confers resistance to bacitracin. The protein is Undecaprenyl-diphosphatase of Shewanella frigidimarina (strain NCIMB 400).